Consider the following 257-residue polypeptide: Protein vip1 (257 aa).

In terms of domain architecture, RRM spans 3–76 (NQVIVTNISP…NKIQITSEDG (74 aa)). The interval 74–99 (EDGGAASTTDQGGAGGDQAARQEDKP) is disordered. A compositionally biased stretch (low complexity) spans 75-84 (DGGAASTTDQ). A phosphoserine mark is found at Ser132 and Ser177. The tract at residues 217–257 (ARRLADAKNQAEGTASPASSTPTAPAEKEPTAPTTESKTTE) is disordered. Phosphothreonine is present on Thr230. Residues 230 to 257 (TASPASSTPTAPAEKEPTAPTTESKTTE) are compositionally biased toward low complexity. 2 positions are modified to phosphoserine: Ser232 and Ser235.

In Schizosaccharomyces pombe (strain 972 / ATCC 24843) (Fission yeast), this protein is Protein vip1 (vip1).